The following is a 196-amino-acid chain: Transcription repressor OFP10 (196 aa).

The 60-residue stretch at 100–159 folds into the OVATE domain; that stretch reads MAKESINPFEDYKKSMNQMIEERYIETESELKELLRCFLDINPSPQHNLIVRAFVDVCSH.

Expressed in roots, cauline leaves, shoots, stems, flower buds and siliques.

The protein localises to the nucleus. Functionally, transcriptional repressor that may regulate multiple aspects of plant growth and development through the regulation of BEL1-LIKE (BLH) and KNOX TALE (KNAT) homeodomain transcription factors. This Arabidopsis thaliana (Mouse-ear cress) protein is Transcription repressor OFP10 (OFP10).